The primary structure comprises 254 residues: MGRGRVEMKRIENKINRQVTFSKRRAGLLKKAHEISILCDAEVSLIVFSHKGKLFEYSSESCMEKVLERYERYSYAEKQLKAPDSHVNAQTNWSMEYSRLKAKIELLERNQRHYLGEDLESISIKELQNLEQQLDTSLKHIRSRKNQLMHESLNHLQRKEKEILEENSMLTKQIKERESILRTHQNQSEQQNRSHHVAPQPQPQLNPYMISHQASPFLNMGGMYQGEDPTAVRRNRLDLTLEPIYNCNLGYFAA.

Residues 1–61 (MGRGRVEMKR…GKLFEYSSES (61 aa)) enclose the MADS-box domain. The 91-residue stretch at 90-180 (QTNWSMEYSR…TKQIKERESI (91 aa)) folds into the K-box domain. The span at 182–191 (RTHQNQSEQQ) shows a compositional bias: polar residues. The disordered stretch occupies residues 182 to 205 (RTHQNQSEQQNRSHHVAPQPQPQL).

In terms of assembly, homodimer capable of binding to CArG-box sequences.

Its subcellular location is the nucleus. Functionally, probable transcription factor that promotes early floral meristem identity in synergy with APETALA1, FRUITFULL and LEAFY. Is required subsequently for the transition of an inflorescence meristem into a floral meristem. Seems to be partially redundant to the function of APETALA1. In Brassica rapa subsp. chinensis (Pak-choi), this protein is Transcription factor CAULIFLOWER (CAL).